Consider the following 322-residue polypeptide: Eukaryotic translation initiation factor 3 subunit I (322 aa).

WD repeat units lie at residues 4-43, 46-85, 141-180, 184-223, and 281-322; these read GHER…RLGT, GHQG…VIAS, MVES…KVVD, DHTA…CLKT, and GHFG…NIFE.

This sequence belongs to the eIF-3 subunit I family. In terms of assembly, component of the eukaryotic translation initiation factor 3 (eIF-3) complex. The eIF-3 complex interacts with pix.

It localises to the cytoplasm. Component of the eukaryotic translation initiation factor 3 (eIF-3) complex, which is involved in protein synthesis of a specialized repertoire of mRNAs and, together with other initiation factors, stimulates binding of mRNA and methionyl-tRNAi to the 40S ribosome. The eIF-3 complex specifically targets and initiates translation of a subset of mRNAs involved in cell proliferation. The chain is Eukaryotic translation initiation factor 3 subunit I from Drosophila virilis (Fruit fly).